Here is a 433-residue protein sequence, read N- to C-terminus: Glutamate-1-semialdehyde 2,1-aminomutase (433 aa).

An N6-(pyridoxal phosphate)lysine modification is found at Lys-267.

It belongs to the class-III pyridoxal-phosphate-dependent aminotransferase family. HemL subfamily. Homodimer. Pyridoxal 5'-phosphate serves as cofactor.

Its subcellular location is the cytoplasm. It carries out the reaction (S)-4-amino-5-oxopentanoate = 5-aminolevulinate. Its pathway is porphyrin-containing compound metabolism; protoporphyrin-IX biosynthesis; 5-aminolevulinate from L-glutamyl-tRNA(Glu): step 2/2. In Syntrophobacter fumaroxidans (strain DSM 10017 / MPOB), this protein is Glutamate-1-semialdehyde 2,1-aminomutase.